Consider the following 146-residue polypeptide: D-aminoacyl-tRNA deacylase (146 aa).

A Gly-cisPro motif, important for rejection of L-amino acids motif is present at residues 137–138; it reads GP.

Belongs to the DTD family. In terms of assembly, homodimer.

It localises to the cytoplasm. The catalysed reaction is glycyl-tRNA(Ala) + H2O = tRNA(Ala) + glycine + H(+). It catalyses the reaction a D-aminoacyl-tRNA + H2O = a tRNA + a D-alpha-amino acid + H(+). Its function is as follows. An aminoacyl-tRNA editing enzyme that deacylates mischarged D-aminoacyl-tRNAs. Also deacylates mischarged glycyl-tRNA(Ala), protecting cells against glycine mischarging by AlaRS. Acts via tRNA-based rather than protein-based catalysis; rejects L-amino acids rather than detecting D-amino acids in the active site. By recycling D-aminoacyl-tRNA to D-amino acids and free tRNA molecules, this enzyme counteracts the toxicity associated with the formation of D-aminoacyl-tRNA entities in vivo and helps enforce protein L-homochirality. The polypeptide is D-aminoacyl-tRNA deacylase (Hahella chejuensis (strain KCTC 2396)).